Here is a 274-residue protein sequence, read N- to C-terminus: 2-dehydro-3-deoxyphosphooctonate aldolase (274 aa).

This sequence belongs to the KdsA family.

The protein localises to the cytoplasm. It catalyses the reaction D-arabinose 5-phosphate + phosphoenolpyruvate + H2O = 3-deoxy-alpha-D-manno-2-octulosonate-8-phosphate + phosphate. It functions in the pathway carbohydrate biosynthesis; 3-deoxy-D-manno-octulosonate biosynthesis; 3-deoxy-D-manno-octulosonate from D-ribulose 5-phosphate: step 2/3. It participates in bacterial outer membrane biogenesis; lipopolysaccharide biosynthesis. The sequence is that of 2-dehydro-3-deoxyphosphooctonate aldolase from Rickettsia conorii (strain ATCC VR-613 / Malish 7).